The sequence spans 349 residues: 5-deoxyribose 1-phosphate isomerase (349 aa).

Substrate-binding positions include Arg-49 to Ala-51, Arg-92, and Gln-199. Asp-240 functions as the Proton donor in the catalytic mechanism. Asn-250 to Lys-251 provides a ligand contact to substrate.

The protein belongs to the EIF-2B alpha/beta/delta subunits family. DrdI subfamily.

The catalysed reaction is 5-deoxy-alpha-D-ribose 1-phosphate = 5-deoxy-D-ribulose 1-phosphate. The protein operates within carbohydrate degradation. In terms of biological role, catalyzes the isomerization of 5-deoxy-alpha-D-ribose 1-phosphate to 5-deoxy-D-ribulose 1-phosphate, as part of a 5-deoxyribose salvage pathway that recycles this toxic radical SAM enzyme by-product to mainstream metabolites. This is 5-deoxyribose 1-phosphate isomerase from Clostridium botulinum (strain ATCC 19397 / Type A).